Reading from the N-terminus, the 133-residue chain is Small ribosomal subunit protein uS8 (133 aa).

Belongs to the universal ribosomal protein uS8 family. In terms of assembly, part of the 30S ribosomal subunit. Contacts proteins S5 and S12.

Its function is as follows. One of the primary rRNA binding proteins, it binds directly to 16S rRNA central domain where it helps coordinate assembly of the platform of the 30S subunit. This chain is Small ribosomal subunit protein uS8, found in Micrococcus luteus (Micrococcus lysodeikticus).